Reading from the N-terminus, the 486-residue chain is Galactose-1-phosphate uridylyltransferase (486 aa).

The protein belongs to the galactose-1-phosphate uridylyltransferase type 2 family.

It is found in the cytoplasm. The enzyme catalyses alpha-D-galactose 1-phosphate + UDP-alpha-D-glucose = alpha-D-glucose 1-phosphate + UDP-alpha-D-galactose. Its pathway is carbohydrate metabolism; galactose metabolism. This Lacticaseibacillus casei (Lactobacillus casei) protein is Galactose-1-phosphate uridylyltransferase.